We begin with the raw amino-acid sequence, 202 residues long: Guanylate kinase (202 aa).

The region spanning 3-181 is the Guanylate kinase-like domain; that stretch reads GNLFVVAAPS…ALDDLRAVVR (179 aa). 10 to 17 lines the ATP pocket; that stretch reads APSGAGKT.

This sequence belongs to the guanylate kinase family.

It is found in the cytoplasm. The catalysed reaction is GMP + ATP = GDP + ADP. Functionally, essential for recycling GMP and indirectly, cGMP. This chain is Guanylate kinase, found in Dechloromonas aromatica (strain RCB).